A 194-amino-acid polypeptide reads, in one-letter code: Lysozyme g (194 aa).

Active-site residues include E71 and D84.

Belongs to the glycosyl hydrolase 23 family. In terms of tissue distribution, expressed in intestine, liver, spleen, anterior kidney, posterior kidney, heart, gill, muscle and leukocytes.

It catalyses the reaction Hydrolysis of (1-&gt;4)-beta-linkages between N-acetylmuramic acid and N-acetyl-D-glucosamine residues in a peptidoglycan and between N-acetyl-D-glucosamine residues in chitodextrins.. Its function is as follows. Has lytic activity against M.lysodeikticus, V.alginolyticus from Epinephelus fario, V.vulnificus from culture water, A.hydrophila from soft-shell turtle, A.hydrophila from goldfish and V.parahaemolyticus, P.fluorescens and V.fluvialis from culture water. This is Lysozyme g from Epinephelus coioides (Orange-spotted grouper).